The following is a 419-amino-acid chain: Tubby-like protein 4 (419 aa).

Residues 1-96 (MAATKREPLR…EREEEEEGSS (96 aa)) are disordered. A compositionally biased stretch (basic and acidic residues) spans 33–57 (AKEKEKENEVPTEIGRGKDGGEKKP).

The protein belongs to the TUB family.

The chain is Tubby-like protein 4 (TULP4) from Oryza sativa subsp. japonica (Rice).